Consider the following 128-residue polypeptide: RutC family protein BUsg_359 (128 aa).

Belongs to the RutC family.

This Buchnera aphidicola subsp. Schizaphis graminum (strain Sg) protein is RutC family protein BUsg_359.